The primary structure comprises 296 residues: Ribosomal RNA small subunit methyltransferase H (296 aa).

S-adenosyl-L-methionine is bound by residues 30-32, Asp49, Phe76, Asp97, and Gln104; that span reads GGH.

It belongs to the methyltransferase superfamily. RsmH family.

Its subcellular location is the cytoplasm. It carries out the reaction cytidine(1402) in 16S rRNA + S-adenosyl-L-methionine = N(4)-methylcytidine(1402) in 16S rRNA + S-adenosyl-L-homocysteine + H(+). Specifically methylates the N4 position of cytidine in position 1402 (C1402) of 16S rRNA. This Mesomycoplasma hyopneumoniae (strain 232) (Mycoplasma hyopneumoniae) protein is Ribosomal RNA small subunit methyltransferase H.